We begin with the raw amino-acid sequence, 111 residues long: MSYPIGAQPQGVQGYVTSNSSQWNSDVFDCCEDMGICLCGTFVPCILACKVSQDFGECCCLPCLFGSVLAVRTGIRERYHIEGSICNDWVCLSFCGQCTLCQMARELKARN.

This sequence belongs to the cornifelin family.

The chain is Cornifelin homolog (cnfn) from Xenopus tropicalis (Western clawed frog).